Reading from the N-terminus, the 138-residue chain is Transcription antitermination protein NusB (138 aa).

Belongs to the NusB family.

In terms of biological role, involved in transcription antitermination. Required for transcription of ribosomal RNA (rRNA) genes. Binds specifically to the boxA antiterminator sequence of the ribosomal RNA (rrn) operons. The chain is Transcription antitermination protein NusB from Helicobacter acinonychis (strain Sheeba).